Consider the following 50-residue polypeptide: Insulin (50 aa).

3 disulfide bridges follow: C7-C36, C19-C49, and C35-C40.

The protein belongs to the insulin family. Heterodimer of a B chain and an A chain linked by two disulfide bonds.

It localises to the secreted. Functionally, insulin decreases blood glucose concentration. It increases cell permeability to monosaccharides, amino acids and fatty acids. It accelerates glycolysis, the pentose phosphate cycle, and glycogen synthesis in liver. The sequence is that of Insulin (ins) from Myoxocephalus scorpius (Shorthorn sculpin).